The primary structure comprises 275 residues: Beta-lactamase OXA-3 (275 aa).

Residues methionine 1–alanine 21 form the signal peptide. Serine 72 serves as the catalytic Acyl-ester intermediate. At lysine 75 the chain carries N6-carboxylysine. Residue lysine 210–glycine 212 coordinates substrate.

Belongs to the class-D beta-lactamase family.

The catalysed reaction is a beta-lactam + H2O = a substituted beta-amino acid. Its function is as follows. This is an oxacillin-hydrolyzing beta-lactamase. The polypeptide is Beta-lactamase OXA-3 (bla) (Pseudomonas aeruginosa).